We begin with the raw amino-acid sequence, 95 residues long: Citrate lyase acyl carrier protein (95 aa).

O-(phosphoribosyl dephospho-coenzyme A)serine is present on S14.

Belongs to the CitD family. As to quaternary structure, oligomer with a subunit composition of (alpha,beta,gamma)6.

It localises to the cytoplasm. In terms of biological role, covalent carrier of the coenzyme of citrate lyase. The polypeptide is Citrate lyase acyl carrier protein (Haemophilus ducreyi (strain 35000HP / ATCC 700724)).